A 300-amino-acid chain; its full sequence is Cation-efflux pump FieF (300 aa).

The helical transmembrane segment at 24-44 threads the bilayer; it reads LLIKIFAWWYTGSVSILAALV. Zn(2+) is bound by residues Asp-45 and Asp-49. The next 2 membrane-spanning stretches (helical) occupy residues 82–102 and 114–134; these read AALA…LTSI and PGVG…LVTF. Zn(2+) contacts are provided by His-153 and Asp-157. A run of 2 helical transmembrane segments spans residues 156–176 and 178–198; these read SDVM…YGWH and ADAL…LRMG.

The protein belongs to the cation diffusion facilitator (CDF) transporter (TC 2.A.4) family. FieF subfamily. In terms of assembly, homodimer.

The protein resides in the cell inner membrane. The catalysed reaction is Zn(2+)(in) + H(+)(out) = Zn(2+)(out) + H(+)(in). It catalyses the reaction Cd(2+)(in) + H(+)(out) = Cd(2+)(out) + H(+)(in). It carries out the reaction Fe(2+)(in) + H(+)(out) = Fe(2+)(out) + H(+)(in). In terms of biological role, divalent metal cation transporter which exports Zn(2+), Cd(2+) and possibly Fe(2+). May be involved in zinc and iron detoxification by efflux. This chain is Cation-efflux pump FieF, found in Salmonella schwarzengrund (strain CVM19633).